The sequence spans 214 residues: Acetoin utilization protein AcuB (214 aa).

2 consecutive CBS domains span residues 7 to 66 (MKRD…ENKR) and 78 to 135 (MKKD…GADQ).

As to quaternary structure, interacts with YabA.

It functions in the pathway ketone degradation; acetoin degradation. In terms of biological role, role in growth and sporulation on acetoin or butanediol. Involved in the breakdown of these compounds used as a carbon source. This is Acetoin utilization protein AcuB (acuB) from Bacillus subtilis (strain 168).